A 248-amino-acid polypeptide reads, in one-letter code: Granzyme-like protein 1 (248 aa).

Residues methionine 1–alanine 18 form the signal peptide. The propeptide at alanine 19–glutamate 20 is activation peptide. In terms of domain architecture, Peptidase S1 spans isoleucine 21–lysine 246. Cysteine 50 and cysteine 66 are disulfide-bonded. Histidine 65 functions as the Charge relay system in the catalytic mechanism. The N-linked (GlcNAc...) asparagine glycan is linked to asparagine 72. Aspartate 109 acts as the Charge relay system in catalysis. 2 cysteine pairs are disulfide-bonded: cysteine 143/cysteine 210 and cysteine 174/cysteine 189. The active-site Charge relay system is the serine 204.

The protein belongs to the peptidase S1 family. Granzyme subfamily. As to expression, duodenum.

This enzyme is necessary for target cell lysis in cell-mediated immune responses. The chain is Granzyme-like protein 1 from Rattus norvegicus (Rat).